We begin with the raw amino-acid sequence, 315 residues long: Heme oxygenase 2 (315 aa).

Residues 1 to 12 (MSSEVETSEGVD) show a composition bias toward acidic residues. The interval 1–28 (MSSEVETSEGVDESEKNSMAPEKENHTK) is disordered. Ser-2 is subject to N-acetylserine. Ser-2 bears the Phosphoserine mark. Topologically, residues 2–294 (SSEVETSEGV…TTVAVLRKPS (293 aa)) are cytoplasmic. The segment covering 13–28 (ESEKNSMAPEKENHTK) has biased composition (basic and acidic residues). Heme b is bound by residues His-44, Tyr-153, Lys-198, and Arg-202. HRM repeat units follow at residues 263-268 (KCPFYA) and 280-285 (NCPFQT). S-nitrosocysteine occurs at positions 264 and 281. A helical; Anchor for type IV membrane protein membrane pass occupies residues 295-315 (LQLILAASVALVAGLLAWYYM).

Belongs to the heme oxygenase family. A soluble form arises by proteolytic removal of the membrane anchor. In terms of processing, S-nitrosylated by BLVRB. Ubiquitous.

It is found in the microsome membrane. The protein resides in the endoplasmic reticulum membrane. The catalysed reaction is heme b + 3 reduced [NADPH--hemoprotein reductase] + 3 O2 = biliverdin IXalpha + CO + Fe(2+) + 3 oxidized [NADPH--hemoprotein reductase] + 3 H2O + H(+). Its function is as follows. Catalyzes the oxidative cleavage of heme at the alpha-methene bridge carbon, released as carbon monoxide (CO), to generate biliverdin IXalpha, while releasing the central heme iron chelate as ferrous iron. The protein is Heme oxygenase 2 (Hmox2) of Mus musculus (Mouse).